The sequence spans 116 residues: Ribonuclease P protein component (116 aa).

This sequence belongs to the RnpA family. In terms of assembly, consists of a catalytic RNA component (M1 or rnpB) and a protein subunit.

It carries out the reaction Endonucleolytic cleavage of RNA, removing 5'-extranucleotides from tRNA precursor.. Functionally, RNaseP catalyzes the removal of the 5'-leader sequence from pre-tRNA to produce the mature 5'-terminus. It can also cleave other RNA substrates such as 4.5S RNA. The protein component plays an auxiliary but essential role in vivo by binding to the 5'-leader sequence and broadening the substrate specificity of the ribozyme. This Lachnoclostridium phytofermentans (strain ATCC 700394 / DSM 18823 / ISDg) (Clostridium phytofermentans) protein is Ribonuclease P protein component.